The sequence spans 418 residues: Putative ion-transport protein YfeO (418 aa).

12 helical membrane passes run leucine 10–valine 30, aspartate 54–isoleucine 74, alanine 99–proline 119, glutamate 120–proline 140, isoleucine 149–isoleucine 169, leucine 186–proline 206, isoleucine 223–cysteine 243, valine 258–valine 278, aspartate 300–phenylalanine 320, glycine 322–histidine 342, valine 343–valine 363, and leucine 371–methionine 391.

It belongs to the chloride channel (TC 2.A.49) family.

It is found in the cell membrane. The protein is Putative ion-transport protein YfeO of Shigella boydii serotype 4 (strain Sb227).